Consider the following 285-residue polypeptide: Cytosolic Fe-S cluster assembly factor CFD1 (285 aa).

30–37 (GKGGVGKS) contributes to the ATP binding site. [4Fe-4S] cluster contacts are provided by cysteine 206 and cysteine 209.

Belongs to the Mrp/NBP35 ATP-binding proteins family. NUBP2/CFD1 subfamily. Heterotetramer of 2 NBP35 and 2 CFD1 chains. The cofactor is [4Fe-4S] cluster.

The protein localises to the cytoplasm. In terms of biological role, component of the cytosolic iron-sulfur (Fe/S) protein assembly (CIA) machinery. Required for maturation of extramitochondrial Fe-S proteins. The NBP35-CFD1 heterotetramer forms a Fe-S scaffold complex, mediating the de novo assembly of an Fe-S cluster and its transfer to target apoproteins. Required for biogenesis and export of both ribosomal subunits, which may reflect a role in assembly of the Fe/S clusters in RLI1, a protein which performs rRNA processing and ribosome export. The protein is Cytosolic Fe-S cluster assembly factor CFD1 of Candida glabrata (strain ATCC 2001 / BCRC 20586 / JCM 3761 / NBRC 0622 / NRRL Y-65 / CBS 138) (Yeast).